A 238-amino-acid polypeptide reads, in one-letter code: Protein Iojap, chloroplastic (238 aa).

The transit peptide at Met1–Arg66 directs the protein to the chloroplast.

It belongs to the Iojap/RsfS family. In terms of assembly, interacts with chloroplast ribosomal protein uL14c (rpl14).

It localises to the plastid. It is found in the chloroplast. Its function is as follows. May be a ribosome silencing factor (Potential). Involved in plastid biogenesis. This is Protein Iojap, chloroplastic (IJ) from Arabidopsis thaliana (Mouse-ear cress).